Reading from the N-terminus, the 372-residue chain is Peroxisomal biogenesis factor 3 (372 aa).

Residues 1-15 (MLRSMWNFLKRHKKK) lie on the Cytoplasmic side of the membrane. The interval 1–45 (MLRSMWNFLKRHKKKCIFLGTVLGGVYILGKYGQKKLREIQEREA) is targeting to peroxisomes. A helical transmembrane segment spans residues 16–36 (CIFLGTVLGGVYILGKYGQKK). At 37–116 (LREIQEREAA…LKIISFTRSI (80 aa)) the chain is on the peroxisomal side. Residues 117–140 (VAVYSTCMLVVLLRVQLNIIGGYI) form a helical membrane-spanning segment. The interval 120 to 136 (YSTCMLVVLLRVQLNII) is interaction with PEX19. Residues 141–372 (YLDNATVGKN…AFSTPQQLEK (232 aa)) lie on the Cytoplasmic side of the membrane.

It belongs to the peroxin-3 family. Interacts with PEX19.

The protein localises to the peroxisome membrane. In terms of biological role, involved in peroxisome biosynthesis and integrity. Assembles membrane vesicles before the matrix proteins are translocated. As a docking factor for PEX19, is necessary for the import of peroxisomal membrane proteins in the peroxisomes. This Rattus norvegicus (Rat) protein is Peroxisomal biogenesis factor 3 (Pex3).